Consider the following 508-residue polypeptide: Photosystem II CP47 reaction center protein (508 aa).

6 helical membrane passes run 21 to 36 (AVHI…WAGS), 101 to 115 (IVFS…IWHW), 140 to 156 (GIHL…FGAF), 203 to 218 (IAAG…FHLS), 237 to 252 (VLSS…AFVV), and 457 to 472 (TFAL…HGAR).

The protein belongs to the PsbB/PsbC family. PsbB subfamily. PSII is composed of 1 copy each of membrane proteins PsbA, PsbB, PsbC, PsbD, PsbE, PsbF, PsbH, PsbI, PsbJ, PsbK, PsbL, PsbM, PsbT, PsbX, PsbY, PsbZ, Psb30/Ycf12, at least 3 peripheral proteins of the oxygen-evolving complex and a large number of cofactors. It forms dimeric complexes. Requires Binds multiple chlorophylls. PSII binds additional chlorophylls, carotenoids and specific lipids. as cofactor.

The protein resides in the plastid. Its subcellular location is the chloroplast thylakoid membrane. One of the components of the core complex of photosystem II (PSII). It binds chlorophyll and helps catalyze the primary light-induced photochemical processes of PSII. PSII is a light-driven water:plastoquinone oxidoreductase, using light energy to abstract electrons from H(2)O, generating O(2) and a proton gradient subsequently used for ATP formation. The sequence is that of Photosystem II CP47 reaction center protein from Triticum aestivum (Wheat).